Reading from the N-terminus, the 143-residue chain is Ribonuclease H (143 aa).

The region spanning 1–136 (MQEIEIFCDG…CDSLAKLEAQ (136 aa)) is the RNase H type-1 domain. Mg(2+)-binding residues include aspartate 9, glutamate 47, aspartate 69, and aspartate 128.

It belongs to the RNase H family. In terms of assembly, monomer. The cofactor is Mg(2+).

The protein localises to the cytoplasm. The enzyme catalyses Endonucleolytic cleavage to 5'-phosphomonoester.. Its function is as follows. Endonuclease that specifically degrades the RNA of RNA-DNA hybrids. This chain is Ribonuclease H, found in Helicobacter acinonychis (strain Sheeba).